A 1134-amino-acid polypeptide reads, in one-letter code: Nck-associated protein 1-like (1134 aa).

A disordered region spans residues 638-671; it reads KAKNKKSMKQRQAPRKGEPERDKPGAESHRKNRS. Positions 639–651 are enriched in basic residues; that stretch reads AKNKKSMKQRQAP. Over residues 652 to 666 the composition is skewed to basic and acidic residues; the sequence is RKGEPERDKPGAESH. Residues 999 to 1019 form a helical membrane-spanning segment; it reads LLLIFLAVSLPLLATDPSSFF.

As to quaternary structure, in hematopoietic cells, component of the WAVE2 complex composed of ABI1, CYFIP1/SRA1, NCKAP1L/HEM1 and WASF2/WAVE2. Interacts with ARHGAP4, PIK3C3/VPS34 and PPP1R12A/MYPT1. Interacts with mammalian target of rapamycin complex 2 (mTORC2) components, including MTOR and RICTOR. In terms of tissue distribution, predominantly expressed in developing and mature hematopoietic cells. Also detected in urogenital tissues, including testis.

The protein resides in the membrane. The protein localises to the cytoplasm. Functionally, essential hematopoietic-specific regulator of the actin cytoskeleton. Controls lymphocyte development, activation, proliferation and homeostasis, erythrocyte membrane stability, as well as phagocytosis and migration by neutrophils and macrophages. Component of the WAVE2 complex which signals downstream of RAC to stimulate F-actin polymerization. Required for stabilization and/or translation of the WAVE2 complex proteins in hematopoietic cells. Within the WAVE2 complex, enables the cortical actin network to restrain excessive degranulation and granule release by T-cells. Required for efficient T-lymphocyte and neutrophil migration. Exhibits complex cycles of activation and inhibition to generate waves of propagating the assembly with actin. Also involved in mechanisms WAVE independent to regulate myosin and actin polymerization during neutrophil chemotaxis. In T-cells, required for proper mechanistic target of rapamycin complex 2 (mTORC2)-dependent AKT phosphorylation, cell proliferation and cytokine secretion, including that of IL2 and TNF. The polypeptide is Nck-associated protein 1-like (Mus musculus (Mouse)).